We begin with the raw amino-acid sequence, 523 residues long: 2-isopropylmalate synthase (523 aa).

The 263-residue stretch at 5 to 267 (VIIFDTTLRD…HTNINHHEIW (263 aa)) folds into the Pyruvate carboxyltransferase domain. Residues D14, H202, H204, and N238 each coordinate Mn(2+). The regulatory domain stretch occupies residues 392 to 523 (RLDYFSVQSG…QNKENNKETV (132 aa)).

The protein belongs to the alpha-IPM synthase/homocitrate synthase family. LeuA type 1 subfamily. As to quaternary structure, homodimer. It depends on Mn(2+) as a cofactor.

The protein resides in the cytoplasm. It carries out the reaction 3-methyl-2-oxobutanoate + acetyl-CoA + H2O = (2S)-2-isopropylmalate + CoA + H(+). Its pathway is amino-acid biosynthesis; L-leucine biosynthesis; L-leucine from 3-methyl-2-oxobutanoate: step 1/4. Functionally, catalyzes the condensation of the acetyl group of acetyl-CoA with 3-methyl-2-oxobutanoate (2-ketoisovalerate) to form 3-carboxy-3-hydroxy-4-methylpentanoate (2-isopropylmalate). This chain is 2-isopropylmalate synthase, found in Salmonella typhi.